The following is a 463-amino-acid chain: Probable mannan endo-1,4-beta-mannosidase F (463 aa).

A signal peptide spans 1–18; that stretch reads MRSLSSIALLSVVGAASA. Residues 19-54 form the CBM1 domain; that stretch reads QAGPWAQCGGKSFSGSSECASGWKCQELNEWFSQCV. A disordered region spans residues 57–78; that stretch reads AESTTPTVSSTPTPTDAPSVSI. Low complexity predominate over residues 59 to 77; it reads STTPTVSSTPTPTDAPSVS. Residues 75 to 118 are ser-rich linker; that stretch reads SVSITASATTGINKSISVSSASKSTPLPSSSSASPSPRPTGSGS. An N-linked (GlcNAc...) asparagine glycan is attached at N87. A compositionally biased stretch (low complexity) spans 93–118; the sequence is SSASKSTPLPSSSSASPSPRPTGSGS. The segment at 93–121 is disordered; it reads SSASKSTPLPSSSSASPSPRPTGSGSFAK. Positions 119–463 are catalytic; sequence FAKADGLQFS…MDHMENVNKN (345 aa). Substrate contacts are provided by W171 and N285. Catalysis depends on E286, which acts as the Proton donor. Y361 contributes to the substrate binding site. The active-site Nucleophile is the E395. Residue W424 participates in substrate binding.

The protein belongs to the glycosyl hydrolase 5 (cellulase A) family.

It is found in the secreted. The enzyme catalyses Random hydrolysis of (1-&gt;4)-beta-D-mannosidic linkages in mannans, galactomannans and glucomannans.. Endo-1,4-mannanase, a crucial enzyme for depolymerization of seed galactomannans and wood galactoglucomannans. The polypeptide is Probable mannan endo-1,4-beta-mannosidase F (manF) (Aspergillus flavus (strain ATCC 200026 / FGSC A1120 / IAM 13836 / NRRL 3357 / JCM 12722 / SRRC 167)).